We begin with the raw amino-acid sequence, 284 residues long: N-acylphosphatidylethanolamine synthase (284 aa).

The chain crosses the membrane as a helical span at residues 21-37 (TVIMAVSAFAKAVANLC). Positions 67 to 72 (HMSTLD) match the HXXXXD motif motif. Positions 122 to 163 (GGGIYQENMNEALQRLKDGSWLHTFPEGKVFQDDVPIRRLKW) are hydrophilic.

The protein belongs to the taffazin family. As to expression, essentially present in young tissues. Expressed in roots, cotyledons, leaves, and shoot and root apical meristems.

It is found in the cell membrane. In terms of biological role, acyltransferase that catalyzes the N-acylation of phosphatidylethanolamine to form N-acylphosphatidylethanolamine (N-acyl-PE) (e.g. NAPEs containing C16:0, C16:1, C18:0, and C18:1). Also mediates the formation of acylphosphatidylglycerol (acyl-PG) from lysoglycerophospholipid by O-acylation. Uses acyl-CoA as acyl donors. Acylates 1-acyllysophosphatidylethanolamine (1-acyllyso-PE) and 1-acyllysophosphatidylglycerol (1-acyllyso-PG) at the sn-2-position. The chain is N-acylphosphatidylethanolamine synthase from Arabidopsis thaliana (Mouse-ear cress).